We begin with the raw amino-acid sequence, 784 residues long: Transcriptional activator somA (784 aa).

Residues 43–75 enclose the LisH domain; the sequence is MINNLNTYIYDYFLKRGYHECARALVKDESIKL. Polar residues predominate over residues 75–84; it reads LNTEPPTKTS. Disordered stretches follow at residues 75–122, 212–295, 424–726, and 764–784; these read LNTE…PNLA, GLSQ…SQAL, MMAR…DLSI, and GFDPNISYPTDGVETGAGDGL. Residues 103 to 117 show a composition bias toward basic and acidic residues; the sequence is DSKDGDKIKIPDDLP. Over residues 215-233 the composition is skewed to low complexity; sequence QQQIAQLQKNQQMHMMQQM. Positions 234 to 244 are enriched in basic and acidic residues; it reads QREHSDMDMNG. Positions 247-259 are enriched in low complexity; it reads PQSPSSAENAPSP. Positions 453-467 are enriched in polar residues; sequence SPQGSRAGTSPNPNE. Positions 564–592 are enriched in low complexity; that stretch reads QQQQGQPMGPQQSPAQQPQSTGTPQTQNS. A compositionally biased stretch (polar residues) spans 607 to 624; that stretch reads RTSPQSQNAAPPTPQQAN. Residues 629 to 638 are compositionally biased toward basic and acidic residues; that stretch reads KKREPKDTAR. 2 stretches are compositionally biased toward low complexity: residues 644-661 and 691-701; these read KQPAAAAAAANTAATPSS and PTTSAPQQPTS. Over residues 702–715 the composition is skewed to pro residues; sequence APAPQPIVQQPPPD.

This sequence belongs to the FLO8 family. As to quaternary structure, interacts with ptaB.

The protein localises to the nucleus. Transcription factor that controls the expression of genes related to the process of conidiation and adherence and regulates biofilm formation. Controls conidiation and adhesion primarily by affecting the expression of the three regulatory genes flbB, stuA and medA. Required for virulence in an egg and a mouse infection model. This Aspergillus fumigatus (strain ATCC MYA-4609 / CBS 101355 / FGSC A1100 / Af293) (Neosartorya fumigata) protein is Transcriptional activator somA.